The chain runs to 441 residues: Amino-acid acetyltransferase (441 aa).

Residues 295-434 (EQVRRATIND…QELYNYQRRS (140 aa)) form the N-acetyltransferase domain.

It belongs to the acetyltransferase family. ArgA subfamily. In terms of assembly, homohexamer.

The protein resides in the cytoplasm. It carries out the reaction L-glutamate + acetyl-CoA = N-acetyl-L-glutamate + CoA + H(+). Its pathway is amino-acid biosynthesis; L-arginine biosynthesis; N(2)-acetyl-L-ornithine from L-glutamate: step 1/4. The protein is Amino-acid acetyltransferase of Yersinia enterocolitica serotype O:8 / biotype 1B (strain NCTC 13174 / 8081).